The primary structure comprises 351 residues: D-alanine--D-alanine ligase (351 aa).

The ATP-grasp domain occupies N135–E343. Residue L167–S222 coordinates ATP. Mg(2+) contacts are provided by D298, E310, and N312.

Belongs to the D-alanine--D-alanine ligase family. The cofactor is Mg(2+). Mn(2+) is required as a cofactor.

The protein resides in the cytoplasm. It catalyses the reaction 2 D-alanine + ATP = D-alanyl-D-alanine + ADP + phosphate + H(+). Its pathway is cell wall biogenesis; peptidoglycan biosynthesis. Cell wall formation. The protein is D-alanine--D-alanine ligase of Leptospira borgpetersenii serovar Hardjo-bovis (strain JB197).